A 1567-amino-acid polypeptide reads, in one-letter code: Ice nucleation protein (1567 aa).

Low complexity predominate over residues 130-185; it reads PAAEPSAPATQATSATLPTPATPSTQATPSTQSTQSTQSTEATQSTEATPVATVAA. 13 disordered regions span residues 130–195, 270–329, 356–378, 449–474, 502–529, 594–620, 642–668, 689–716, 738–764, 785–810, 833–860, 929–959, and 977–1004; these read PAAE…QQHD, YGST…KGSD, AGSESSLTAGYGSTQTARKGSDV, TQTSGSDSSLTAGYGSTQTARKGSDI, SESSLTAGYGSTQTAQQDSSLTTGYGST, QTAGSDSSLTAGYGSTQTAREGSDVTA, QTSGSDSSLTAGYGSTQTARKGSDVTA, TQTSGSDSSLTAGYGSTQTARKGSDVTA, TQTSGSDSSLTAGYGSTQTAREGSDVTA, and TQTSGSDSSLTAGYGSTQTARKGSDMTAGYG. The segment covering 270–282 has biased composition (polar residues); it reads YGSTQTAQEGSRL. Residues 283–296 show a composition bias toward low complexity; it reads TSGYGSTATSGSDS. Polar residues-rich tracts occupy residues 302–325, 356–373, 449–469, and 502–519; these read YGSTQTAGSESSLTAGYGSTQTAR, AGSESSLTAGYGSTQTAR, TQTSGSDSSLTAGYGSTQTAR, and SESSLTAGYGSTQTAQQD. Low complexity predominate over residues 520-529; it reads SSLTTGYGST. Polar residues-rich tracts occupy residues 594 to 613, 642 to 661, 689 to 709, 738 to 757, 785 to 805, 833 to 853, 929 to 949, and 977 to 997; these read QTAGSDSSLTAGYGSTQTAR, QTSGSDSSLTAGYGSTQTAR, and TQTSGSDSSLTAGYGSTQTAR.

The protein belongs to the bacterial ice nucleation protein family.

It localises to the cell outer membrane. Ice nucleation proteins enable bacteria to nucleate crystallization in supercooled water. This chain is Ice nucleation protein (inaX), found in Xanthomonas campestris pv. translucens.